A 639-amino-acid polypeptide reads, in one-letter code: Mediator of RNA polymerase II transcription subunit 17 (639 aa).

Positions 160-187 (RLQSFNAAADKLLKSASRLENEVASETR) form a coiled coil.

The protein belongs to the Mediator complex subunit 17 family. Component of the Mediator complex.

It localises to the nucleus. Component of the Mediator complex, a coactivator involved in the regulated transcription of nearly all RNA polymerase II-dependent genes. Mediator functions as a bridge to convey information from gene-specific regulatory proteins to the basal RNA polymerase II transcription machinery. Mediator is recruited to promoters by direct interactions with regulatory proteins and serves as a scaffold for the assembly of a functional preinitiation complex with RNA polymerase II and the general transcription factors. The chain is Mediator of RNA polymerase II transcription subunit 17 (srb4) from Aspergillus fumigatus (strain ATCC MYA-4609 / CBS 101355 / FGSC A1100 / Af293) (Neosartorya fumigata).